A 553-amino-acid chain; its full sequence is Probable malate:quinone oxidoreductase (553 aa).

Residues 524 to 553 (PPPKIDVNTPSQATGTAPARPAKASADMAL) form a disordered region.

The protein belongs to the MQO family. It depends on FAD as a cofactor.

It catalyses the reaction (S)-malate + a quinone = a quinol + oxaloacetate. It functions in the pathway carbohydrate metabolism; tricarboxylic acid cycle; oxaloacetate from (S)-malate (quinone route): step 1/1. This chain is Probable malate:quinone oxidoreductase, found in Burkholderia lata (strain ATCC 17760 / DSM 23089 / LMG 22485 / NCIMB 9086 / R18194 / 383).